Here is a 111-residue protein sequence, read N- to C-terminus: Photosystem II reaction center Psb28 protein (111 aa).

It belongs to the Psb28 family. As to quaternary structure, part of the photosystem II complex.

The protein resides in the cellular thylakoid membrane. This is Photosystem II reaction center Psb28 protein from Acaryochloris marina (strain MBIC 11017).